Consider the following 818-residue polypeptide: uncharacterized protein (818 aa).

Low complexity-rich tracts occupy residues 1–33 (MYNNSNSNNNNGSRKRSSPPLYINNNNSGNYIS), 44–68 (NNFLFNNGGFNSFENPQQQSPPQQQ), and 97–150 (NNSN…TKSN). 5 disordered regions span residues 1–68 (MYNN…PQQQ), 92–150 (LNTG…TKSN), 164–220 (KLDN…KYHE), 284–306 (NMNGSSDSSDSSNSSGHSRNNSD), and 415–445 (NINKNNNSNNNNNNNNHNYNKNNNNNNNNNN). Acidic residues-rich tracts occupy residues 172–190 (SEEEEEEQQEEEEEEEEKE) and 205–214 (DNNSQDEDKE). Residues 284–302 (NMNGSSDSSDSSNSSGHSR) are compositionally biased toward low complexity. The helical transmembrane segment at 534–554 (IIAIIVIVWPLIANLTYKFIV) threads the bilayer. The interval 779 to 808 (ANNFMSDSNRSPSSSSSSSSSTSDSENGML) is disordered. The segment covering 784-803 (SDSNRSPSSSSSSSSSTSDS) has biased composition (low complexity).

The protein localises to the membrane. This is an uncharacterized protein from Dictyostelium discoideum (Social amoeba).